A 199-amino-acid polypeptide reads, in one-letter code: uncharacterized protein (199 aa).

A helical transmembrane segment spans residues 21–38 (ISPSATNFIVSLVIMILI).

The protein resides in the membrane. This is an uncharacterized protein from Saccharomyces cerevisiae (strain ATCC 204508 / S288c) (Baker's yeast).